We begin with the raw amino-acid sequence, 303 residues long: N-acetylmuramic acid 6-phosphate etherase (303 aa).

The region spanning 62-225 (IVAAFRQGGR…TTASMVLLGK (164 aa)) is the SIS domain. The active-site Proton donor is Glu90. Glu121 is a catalytic residue.

It belongs to the GCKR-like family. MurNAc-6-P etherase subfamily. Homodimer.

It carries out the reaction N-acetyl-D-muramate 6-phosphate + H2O = N-acetyl-D-glucosamine 6-phosphate + (R)-lactate. Its pathway is amino-sugar metabolism; 1,6-anhydro-N-acetylmuramate degradation. It functions in the pathway amino-sugar metabolism; N-acetylmuramate degradation. It participates in cell wall biogenesis; peptidoglycan recycling. Specifically catalyzes the cleavage of the D-lactyl ether substituent of MurNAc 6-phosphate, producing GlcNAc 6-phosphate and D-lactate. Together with AnmK, is also required for the utilization of anhydro-N-acetylmuramic acid (anhMurNAc) either imported from the medium or derived from its own cell wall murein, and thus plays a role in cell wall recycling. The chain is N-acetylmuramic acid 6-phosphate etherase from Histophilus somni (strain 129Pt) (Haemophilus somnus).